A 203-amino-acid chain; its full sequence is Ras-like protein family member 10A (203 aa).

A small GTPase-like region spans residues 1 to 203; it reads MGGSLRVAVL…ALHPARCSLM (203 aa). A GTP-binding site is contributed by 11–18; the sequence is GAPGVGKT. The Effector region motif lies at 33-42; sequence HRPTDSPCLY. Residues 59 to 62 and 129 to 132 each bind GTP; these read DGDV and NKRD. At Cys200 the chain carries Cysteine methyl ester. Cys200 is lipidated: S-farnesyl cysteine. A propeptide spans 201–203 (removed in mature form); the sequence is SLM.

Belongs to the small GTPase superfamily. Ras family. Isoprenylation is essential for nucleolar localization, and the proliferation-inhibiting activity of RASL10A.

Its subcellular location is the cell membrane. It localises to the nucleus. The protein localises to the nucleolus. It carries out the reaction GTP + H2O = GDP + phosphate + H(+). Functionally, potent inhibitor of cellular proliferation. The protein is Ras-like protein family member 10A (Rasl10a) of Mus musculus (Mouse).